Here is a 122-residue protein sequence, read N- to C-terminus: Small ribosomal subunit protein bS16 (122 aa).

The interval 87–122 is disordered; sequence AQSNPKKALPKKKAQERAAASAAAAEKAAAAAAPEA. Residues 103 to 122 show a composition bias toward low complexity; the sequence is RAAASAAAAEKAAAAAAPEA.

Belongs to the bacterial ribosomal protein bS16 family.

This Methylocella silvestris (strain DSM 15510 / CIP 108128 / LMG 27833 / NCIMB 13906 / BL2) protein is Small ribosomal subunit protein bS16.